Reading from the N-terminus, the 145-residue chain is UPF0735 ACT domain-containing protein CLL_A2896 (145 aa).

The ACT domain maps to T69–M144.

This sequence belongs to the UPF0735 family.

The protein is UPF0735 ACT domain-containing protein CLL_A2896 of Clostridium botulinum (strain Eklund 17B / Type B).